A 131-amino-acid chain; its full sequence is Small ribosomal subunit protein uS8 (131 aa).

Belongs to the universal ribosomal protein uS8 family. In terms of assembly, part of the 30S ribosomal subunit. Contacts proteins S5 and S12.

Its function is as follows. One of the primary rRNA binding proteins, it binds directly to 16S rRNA central domain where it helps coordinate assembly of the platform of the 30S subunit. In Nautilia profundicola (strain ATCC BAA-1463 / DSM 18972 / AmH), this protein is Small ribosomal subunit protein uS8.